The chain runs to 275 residues: NH(3)-dependent NAD(+) synthetase (275 aa).

46-53 (GISGGQDS) contributes to the ATP binding site. A Mg(2+)-binding site is contributed by Asp52. Arg140 lines the deamido-NAD(+) pocket. Thr160 contacts ATP. Mg(2+) is bound at residue Glu165. Deamido-NAD(+)-binding residues include Lys173 and Asp180. ATP is bound by residues Lys189 and Thr211. 260–261 (HK) contributes to the deamido-NAD(+) binding site.

It belongs to the NAD synthetase family. In terms of assembly, homodimer.

It catalyses the reaction deamido-NAD(+) + NH4(+) + ATP = AMP + diphosphate + NAD(+) + H(+). It participates in cofactor biosynthesis; NAD(+) biosynthesis; NAD(+) from deamido-NAD(+) (ammonia route): step 1/1. Catalyzes the ATP-dependent amidation of deamido-NAD to form NAD. Uses ammonia as a nitrogen source. The protein is NH(3)-dependent NAD(+) synthetase of Escherichia coli O127:H6 (strain E2348/69 / EPEC).